The following is a 463-amino-acid chain: Cysteine--tRNA ligase (463 aa).

Residue cysteine 33 coordinates Zn(2+). A 'HIGH' region motif is present at residues 35–45 (PTVYDFAHIGN). Cysteine 221, histidine 246, and glutamate 250 together coordinate Zn(2+). Positions 279–283 (KMSKS) match the 'KMSKS' region motif. Lysine 282 is an ATP binding site.

Belongs to the class-I aminoacyl-tRNA synthetase family. Monomer. Zn(2+) serves as cofactor.

It localises to the cytoplasm. The catalysed reaction is tRNA(Cys) + L-cysteine + ATP = L-cysteinyl-tRNA(Cys) + AMP + diphosphate. This chain is Cysteine--tRNA ligase, found in Rhizobium johnstonii (strain DSM 114642 / LMG 32736 / 3841) (Rhizobium leguminosarum bv. viciae).